We begin with the raw amino-acid sequence, 129 residues long: Small ribosomal subunit protein uS12 (129 aa).

The segment at 110–129 is disordered; that stretch reads RKQGRSRYGAHRKQVAATKK.

This sequence belongs to the universal ribosomal protein uS12 family. In terms of assembly, part of the 30S ribosomal subunit. Contacts proteins S8 and S17. May interact with IF1 in the 30S initiation complex.

Its function is as follows. With S4 and S5 plays an important role in translational accuracy. Functionally, interacts with and stabilizes bases of the 16S rRNA that are involved in tRNA selection in the A site and with the mRNA backbone. Located at the interface of the 30S and 50S subunits, it traverses the body of the 30S subunit contacting proteins on the other side and probably holding the rRNA structure together. The combined cluster of proteins S8, S12 and S17 appears to hold together the shoulder and platform of the 30S subunit. This is Small ribosomal subunit protein uS12 from Rickettsia prowazekii (strain Madrid E).